The chain runs to 426 residues: Histidine--tRNA ligase (426 aa).

Belongs to the class-II aminoacyl-tRNA synthetase family. In terms of assembly, homodimer.

It localises to the cytoplasm. The enzyme catalyses tRNA(His) + L-histidine + ATP = L-histidyl-tRNA(His) + AMP + diphosphate + H(+). The sequence is that of Histidine--tRNA ligase from Legionella pneumophila subsp. pneumophila (strain Philadelphia 1 / ATCC 33152 / DSM 7513).